The primary structure comprises 447 residues: Phosphoglucosamine mutase (447 aa).

The active-site Phosphoserine intermediate is the Ser104. Mg(2+)-binding residues include Ser104, Asp243, Asp245, and Asp247. Ser104 carries the phosphoserine modification.

It belongs to the phosphohexose mutase family. Mg(2+) serves as cofactor. Post-translationally, activated by phosphorylation.

The catalysed reaction is alpha-D-glucosamine 1-phosphate = D-glucosamine 6-phosphate. In terms of biological role, catalyzes the conversion of glucosamine-6-phosphate to glucosamine-1-phosphate. The polypeptide is Phosphoglucosamine mutase (Corynebacterium efficiens (strain DSM 44549 / YS-314 / AJ 12310 / JCM 11189 / NBRC 100395)).